The following is a 332-amino-acid chain: MVAVAVMGAGSWGTTMTKVFADAGNTVRLWARRDEVADEIQSTRRNQCYLPGVVIPDAVTATSDPRVALTDADIVVLGVPSHAVRDSLTRWRDFLPDDALIVSLPKGLERDTARRMSEVIAEASGRPSEKIAVLSGPNLAKEVADEQPAATVVACTDHDSAKRVQEACTTAYFRPYTNTDVIGCEIGGVAKNVIALAAGMAAGQNLGFNTAATIITRGLAETVRLGTALGANPATFSGLAGLGDLVATCNSPLSRNRTFGEHLSQGMSLEEAQEACHGQVAEGVNACRAIQSLARAHSVDVPIADAVVSVCFDGATVKESIMNLMERDTKAE.

NADPH-binding residues include serine 11, tryptophan 12, arginine 32, arginine 33, and lysine 106. Positions 106 and 136 each coordinate sn-glycerol 3-phosphate. Alanine 140 is a binding site for NADPH. Positions 191, 244, 254, 255, and 256 each coordinate sn-glycerol 3-phosphate. Catalysis depends on lysine 191, which acts as the Proton acceptor. Arginine 255 provides a ligand contact to NADPH. Residues valine 280 and glutamate 282 each coordinate NADPH.

It belongs to the NAD-dependent glycerol-3-phosphate dehydrogenase family.

Its subcellular location is the cytoplasm. The catalysed reaction is sn-glycerol 3-phosphate + NAD(+) = dihydroxyacetone phosphate + NADH + H(+). It carries out the reaction sn-glycerol 3-phosphate + NADP(+) = dihydroxyacetone phosphate + NADPH + H(+). It functions in the pathway membrane lipid metabolism; glycerophospholipid metabolism. Its function is as follows. Catalyzes the reduction of the glycolytic intermediate dihydroxyacetone phosphate (DHAP) to sn-glycerol 3-phosphate (G3P), the key precursor for phospholipid synthesis. In Corynebacterium kroppenstedtii (strain DSM 44385 / JCM 11950 / CIP 105744 / CCUG 35717), this protein is Glycerol-3-phosphate dehydrogenase [NAD(P)+].